Here is a 134-residue protein sequence, read N- to C-terminus: Transcription antitermination protein NusB (134 aa).

The protein belongs to the NusB family.

Functionally, involved in transcription antitermination. Required for transcription of ribosomal RNA (rRNA) genes. Binds specifically to the boxA antiterminator sequence of the ribosomal RNA (rrn) operons. The protein is Transcription antitermination protein NusB of Shewanella frigidimarina (strain NCIMB 400).